A 787-amino-acid polypeptide reads, in one-letter code: Putative pentatricopeptide repeat-containing protein At1g69350, mitochondrial (787 aa).

The N-terminal 16 residues, 1–16, are a transit peptide targeting the mitochondrion; sequence MTQYMPLFRSCSSLRL. PPR repeat units follow at residues 33–63, 64–98, 99–134, 135–165, 166–200, 201–235, 236–266, 267–301, 302–336, 338–368, 369–403, 404–434, 438–468, 469–503, 504–534, 538–568, 569–603, 604–638, and 639–669; these read DPLPVTKLIESYAFMGSPDSSRLVFEAFPYP, DSFMYGVLIKCNVWCHLLDAAIDLYHRLVSETTQI, SKFVFPSVLRACAGSREHLSVGGKVHGRIIKGGVDD, DAVIETSLLCMYGQTGNLSDAEKVFDGMPVR, DLVAWSTLVSSCLENGEVVKALRMFKCMVDDGVEP, DAVTMISVVEGCAELGCLRIARSVHGQITRKMFDL, DETLCNSLLTMYSKCGDLLSSERIFEKIAKK, NAVSWTAMISSYNRGEFSEKALRSFSEMIKSGIEP, NLVTLYSVLSSCGLIGLIREGKSVHGFAVRRELDP, YESLSLALVELYAECGKLSDCETVLRVVSDR, NIVAWNSLISLYAHRGMVIQALGLFRQMVTQRIKP, DAFTLASSISACENAGLVPLGKQIHGHVIRT, DEFVQNSLIDMYSKSGSVDSASTVFNQIKHR, SVVTWNSMLCGFSQNGNSVEAISLFDYMYHSYLEM, NEVTFLAVIQACSSIGSLEKGKWVHHKLIIS, DLFTDTALIDMYAKCGDLNAAETVFRAMSSR, SIVSWSSMINAYGMHGRIGSAISTFNQMVESGTKP, NEVVFMNVLSACGHSGSVEEGKYYFNLMKSFGVSP, and NSEHFACFIDLLSRSGDLKEAYRTIKEMPFL. Positions 674 to 749 are type E motif; that stretch reads VWGSLVNGCR…VPGYSAIEID (76 aa). A type E(+) motif region spans residues 750-780; sequence QKVFRFGAGEENRIQTDEIYRFLGNLQNLTN.

The protein belongs to the PPR family. PCMP-E subfamily.

It is found in the mitochondrion. The polypeptide is Putative pentatricopeptide repeat-containing protein At1g69350, mitochondrial (PCMP-E66) (Arabidopsis thaliana (Mouse-ear cress)).